Reading from the N-terminus, the 111-residue chain is Fluoride-specific ion channel FluC 3 (111 aa).

The next 3 membrane-spanning stretches (helical) occupy residues 26-46 (IPAGTLTVNLLGSIVLALLTF), 53-73 (VVYLVNIGMLGSFTTFSTFAY), and 91-111 (IFLNVMLCLLGVSIAYLALML). Na(+) is bound by residues Gly-63 and Thr-66.

This sequence belongs to the fluoride channel Fluc/FEX (TC 1.A.43) family.

The protein localises to the cell membrane. The enzyme catalyses fluoride(in) = fluoride(out). Na(+) is not transported, but it plays an essential structural role and its presence is essential for fluoride channel function. Its function is as follows. Fluoride-specific ion channel. Important for reducing fluoride concentration in the cell, thus reducing its toxicity. The sequence is that of Fluoride-specific ion channel FluC 3 from Methanosarcina acetivorans (strain ATCC 35395 / DSM 2834 / JCM 12185 / C2A).